The sequence spans 209 residues: uncharacterized protein (209 aa).

Residues serine 119 and histidine 160 each act as charge relay system in the active site.

It belongs to the peptidase S51 family.

This is an uncharacterized protein from Listeria innocua serovar 6a (strain ATCC BAA-680 / CLIP 11262).